The primary structure comprises 274 residues: Copper chaperone for superoxide dismutase (274 aa).

In terms of domain architecture, HMA spans 11–74; the sequence is VCALEFAVQM…LLESTGRQAV (64 aa). Residues cysteine 22 and cysteine 25 each contribute to the Cu cation site. Residue lysine 76 forms a Glycyl lysine isopeptide (Lys-Gly) (interchain with G-Cter in ubiquitin) linkage. Positions 88–234 are superoxide dismutase-like; the sequence is AAVAILEGCG…LACGIIARSA (147 aa). The cysteines at positions 141 and 227 are disulfide-linked. Zn(2+)-binding residues include histidine 147, histidine 155, histidine 164, and aspartate 167. Glycyl lysine isopeptide (Lys-Gly) (interchain with G-Cter in ubiquitin) cross-links involve residues lysine 189, lysine 216, and lysine 241. Cysteine 244 and cysteine 246 together coordinate Cu cation. Serine 267 carries the post-translational modification Phosphoserine.

This sequence in the C-terminal section; belongs to the Cu-Zn superoxide dismutase family. As to quaternary structure, homodimer, and heterodimer with SOD1. Interacts with COMMD1. Interacts with XIAP/BIRC4. Interacts with SLC31A1(via C-terminal domain); this interaction is Cu(1+)-mediated. The heterodimer CCS:SOD1 interacts with SLC31A1; this heterotrimer is Cu(1+)-mediated and its maintenance is regulated through SOD1 activation. The cofactor is Cu(2+). It depends on Zn(2+) as a cofactor. In terms of processing, ubiquitinion by XIAP/BIRC4 leads to enhancement of its chaperone activity toward its physiologic target, SOD1, rather than proteasomal degradation. XIAP/BIRC4 preferentially ubiquitinates at Lys-241. As to expression, ubiquitous.

It localises to the cytoplasm. Functionally, delivers copper to copper zinc superoxide dismutase (SOD1). This is Copper chaperone for superoxide dismutase from Mus musculus (Mouse).